A 340-amino-acid polypeptide reads, in one-letter code: Sulfotransferase ppzF (340 aa).

Its pathway is secondary metabolite biosynthesis. Functionally, sulfotransferase; part of the gene cluster that mediates the biosynthesis of pyrrolopyrazines, secondary metabolites showing insecticidal activity. The role of ppzF within the pathway has still to be determined. The single multifunctional NRPS ppzA is sufficient to produce peramine via condensation of 1-pyrroline-5-carboxylate and arginine, N-methylation of the alpha-amino group of arginine and reduction of the thioester and the cyclization to form an iminium ion resulting in release from the peptide synthetase. Deprotonation of this intermediate and oxidation of the pyrroline ring would give rise to peramine. In Epichloe species that produce only peramine, the peramine synthetase gene is not localized in a gene cluster, in contrast to Metarhizium species that contain additional pyrrolopyrazine biosynthesis genes. The 2-oxoglutarate-Fe(II) type oxidoreductase ppzC hydroxylates peramine to yield the newly identified compound 8-hydroxyperamine whereas ppzD converts L-proline into trans-4-hydroxy-L-proline, a precursor of peramine biosynthesis. This chain is Sulfotransferase ppzF, found in Metarhizium majus (strain ARSEF 297).